Consider the following 410-residue polypeptide: Cysteine desulfurase IscS (410 aa).

Pyridoxal 5'-phosphate-binding positions include Ala-80–Thr-81, Asn-160, Gln-188, and Ser-208–His-210. The residue at position 211 (Lys-211) is an N6-(pyridoxal phosphate)lysine. Pyridoxal 5'-phosphate is bound at residue Thr-248. Residue Cys-334 is the Cysteine persulfide intermediate of the active site. Cys-334 provides a ligand contact to [2Fe-2S] cluster.

This sequence belongs to the class-V pyridoxal-phosphate-dependent aminotransferase family. NifS/IscS subfamily. Homodimer. Forms a heterotetramer with IscU, interacts with other sulfur acceptors. Requires pyridoxal 5'-phosphate as cofactor.

It is found in the cytoplasm. The enzyme catalyses (sulfur carrier)-H + L-cysteine = (sulfur carrier)-SH + L-alanine. Its pathway is cofactor biosynthesis; iron-sulfur cluster biosynthesis. Master enzyme that delivers sulfur to a number of partners involved in Fe-S cluster assembly, tRNA modification or cofactor biosynthesis. Catalyzes the removal of elemental sulfur atoms from cysteine to produce alanine. Functions as a sulfur delivery protein for Fe-S cluster synthesis onto IscU, an Fe-S scaffold assembly protein, as well as other S acceptor proteins. In Rickettsia africae (strain ESF-5), this protein is Cysteine desulfurase IscS.